A 271-amino-acid chain; its full sequence is Bis(5'-nucleosyl)-tetraphosphatase, symmetrical (271 aa).

Belongs to the Ap4A hydrolase family.

The catalysed reaction is P(1),P(4)-bis(5'-adenosyl) tetraphosphate + H2O = 2 ADP + 2 H(+). Its function is as follows. Hydrolyzes diadenosine 5',5'''-P1,P4-tetraphosphate to yield ADP. The chain is Bis(5'-nucleosyl)-tetraphosphatase, symmetrical from Aliivibrio fischeri (strain MJ11) (Vibrio fischeri).